A 651-amino-acid chain; its full sequence is MAVTRAAAPMVGNCSSAMLIIGRRYFSSPFTEKLRKTNRKKVIDLAAYPPKKIRNFGIVAHVDHGKSTLADRFLEMTGAVEKSSHASQMLDKLQVERERGITVKAQSCTMFHKDCMLNLIDTPGHADFSFEVARSLTATNGILLLVAANQGVQAQTVANFWLAFEAGLTIIPVINKVDLKSANVPRVVSQMENLFDFLPSEILYISAKNGTGIGDVLDAVVERLPPPKVEAHSPLRAHVFDSWYETHHGPVVCVAVHDGVISKGQRIRTYHSDCEYEVLVVGIMIPNMYEVKCLYAGQVGYLLTTMKSVQDAVIGETLYDVSDERNMVQPMPLITPTPPCIYASIYPTNINEYNALRVALYKLALNDSSVQIQHSNSTALGNGFKIGFSGHLHMEEYDANITITAPSVEYRAVIKDNQTILKKRYNGQRVIRLLDASDFPVCPSDIDHFLEPMIKLTLLLSTAYCEHVERLCVDARGEQVENNGLDTDCIMQQWRLPFAEVCMDFFDRLKRITSGYVTYNYQWDGFQKATIELLMIHINDLPIYEFSEIMPSNQIKARAKEIVKKLKEEIPRQQYEVRIKATLGQSKKALVQTVIAPVKKDFTGRLKGNFGGSGWERFCKKLSHQKKGKERMKQLGQVQIPKEAFINVLRR.

Residues Met1–Phe26 constitute a mitochondrion transit peptide. Positions Lys51 to Lys228 constitute a tr-type G domain. Residues Ala60–Ser67, Asp121–His125, and Asn175–Asp178 each bind GTP.

Belongs to the TRAFAC class translation factor GTPase superfamily. Classic translation factor GTPase family. LepA subfamily.

It is found in the mitochondrion inner membrane. The enzyme catalyses GTP + H2O = GDP + phosphate + H(+). In terms of biological role, promotes mitochondrial protein synthesis. May act as a fidelity factor of the translation reaction, by catalyzing a one-codon backward translocation of tRNAs on improperly translocated ribosomes. Binds to mitochondrial ribosomes in a GTP-dependent manner. This is Translation factor GUF1 homolog, mitochondrial from Brugia malayi (Filarial nematode worm).